The chain runs to 199 residues: MRLTAKQITWLKVCLHLAGFLPLLWLFWAINHGGLSADPVKDIQHFTGRTALKFLLATLLVSPLARYAKQPLLIRTRRLLGLWCFVWATLHLTSYALLELGIHNLALLGSELISRPYLTLGIISWLVLLALTLTSTQFAQRKLGKRWQTLHNVVYLVAILAPIHYLWSVKILSPQPVIYATLALALLALRYRKFRQWWR.

Helical transmembrane passes span 10–30 (WLKVCLHLAGFLPLLWLFWAI), 82–102 (LWCFVWATLHLTSYALLELGI), 116–136 (PYLTLGIISWLVLLALTLTST), and 153–173 (VVYLVAILAPIHYLWSVKILS).

Belongs to the MsrQ family. As to quaternary structure, heterodimer of a catalytic subunit (MsrP) and a heme-binding subunit (MsrQ). It depends on FMN as a cofactor. The cofactor is heme b.

It localises to the cell inner membrane. Its function is as follows. Part of the MsrPQ system that repairs oxidized periplasmic proteins containing methionine sulfoxide residues (Met-O), using respiratory chain electrons. Thus protects these proteins from oxidative-stress damage caused by reactive species of oxygen and chlorine generated by the host defense mechanisms. MsrPQ is essential for the maintenance of envelope integrity under bleach stress, rescuing a wide series of structurally unrelated periplasmic proteins from methionine oxidation, including the primary periplasmic chaperone SurA and the lipoprotein Pal. MsrQ provides electrons for reduction to the reductase catalytic subunit MsrP, using the quinone pool of the respiratory chain. This Salmonella dublin (strain CT_02021853) protein is Protein-methionine-sulfoxide reductase heme-binding subunit MsrQ.